The following is a 182-amino-acid chain: Orotate phosphoribosyltransferase (182 aa).

5-phospho-alpha-D-ribose 1-diphosphate contacts are provided by residues R91, K92, K95, H97, and 117 to 125; that span reads EDVTTTGGS. Residues T121 and R149 each coordinate orotate.

This sequence belongs to the purine/pyrimidine phosphoribosyltransferase family. PyrE subfamily. As to quaternary structure, homodimer. Requires Mg(2+) as cofactor.

It catalyses the reaction orotidine 5'-phosphate + diphosphate = orotate + 5-phospho-alpha-D-ribose 1-diphosphate. It participates in pyrimidine metabolism; UMP biosynthesis via de novo pathway; UMP from orotate: step 1/2. In terms of biological role, catalyzes the transfer of a ribosyl phosphate group from 5-phosphoribose 1-diphosphate to orotate, leading to the formation of orotidine monophosphate (OMP). The protein is Orotate phosphoribosyltransferase of Pyrococcus furiosus (strain ATCC 43587 / DSM 3638 / JCM 8422 / Vc1).